A 293-amino-acid chain; its full sequence is Proline iminopeptidase (293 aa).

The AB hydrolase-1 domain maps to 28–277 (KPLVLLHGGP…FSRHMPFVEE (250 aa)). Ser-104 acts as the Nucleophile in catalysis. The active site involves Asp-244. The active-site Proton donor is His-271.

This sequence belongs to the peptidase S33 family.

The enzyme catalyses Release of N-terminal proline from a peptide.. In terms of biological role, releases the N-terminal proline from various substrates. The chain is Proline iminopeptidase from Clostridium botulinum (strain Hall / ATCC 3502 / NCTC 13319 / Type A).